Consider the following 612-residue polypeptide: RNA polymerase sigma factor RpoD (612 aa).

Residues 191 to 206 are compositionally biased toward acidic residues; it reads QQNNEEDEENNQEDHE. A disordered region spans residues 191–210; sequence QQNNEEDEENNQEDHEDDHS. The interval 378–448 is sigma-70 factor domain-2; that stretch reads MVEANLRLVI…TRSIADQART (71 aa). Positions 402–405 match the Interaction with polymerase core subunit RpoC motif; that stretch reads DLIQ. The segment at 457-533 is sigma-70 factor domain-3; it reads ETINKLNRIS…DTTLELPLDS (77 aa). The interval 546–599 is sigma-70 factor domain-4; sequence VLSGLTAREAKVLRMRFGIDMNTDHTLEEVGKQFDVTRERIRQIEAKALRKLRH. The H-T-H motif DNA-binding region spans 572 to 591; it reads LEEVGKQFDVTRERIRQIEA.

The protein belongs to the sigma-70 factor family. RpoD/SigA subfamily. Interacts transiently with the RNA polymerase catalytic core.

It is found in the cytoplasm. In terms of biological role, sigma factors are initiation factors that promote the attachment of RNA polymerase to specific initiation sites and are then released. This sigma factor is the primary sigma factor during exponential growth. In Buchnera aphidicola subsp. Acyrthosiphon pisum (strain APS) (Acyrthosiphon pisum symbiotic bacterium), this protein is RNA polymerase sigma factor RpoD.